The primary structure comprises 141 residues: Drosulfakinins (141 aa).

The first 33 residues, 1 to 33, serve as a signal peptide directing secretion; the sequence is MGLRSCTHLATLFMTLWALAFCFLVVVPIPAQT. Positions 34 to 73 are excised as a propeptide; it reads TSLQNAKDDRRLQELESKIGAESDQPNANLVGPSFSRFGD. The segment at 51–72 is disordered; sequence KIGAESDQPNANLVGPSFSRFG. A Phenylalanine amide modification is found at Phe82. A propeptide spanning residues 86 to 111 is cleaved from the precursor; sequence VPLISRPMIPIELDLLMDNDDERTKA. Tyr117 is subject to Sulfotyrosine. Position 122 is a phenylalanine amide (Phe122). Tyr134 carries the post-translational modification Sulfotyrosine. Phe139 carries the post-translational modification Phenylalanine amide.

The protein belongs to the gastrin/cholecystokinin family.

It is found in the secreted. Drosulfakinin-0 (DSK 0) plays diverse biological roles including regulating gut muscle contraction in adults but not in larvae. The sequence is that of Drosulfakinins from Drosophila mauritiana (Fruit fly).